The chain runs to 739 residues: Poly(A) polymerase alpha (739 aa).

Positions 1–17 are enriched in low complexity; it reads MPFPVTTQGSQQTQPPQ. The tract at residues 1 to 22 is disordered; it reads MPFPVTTQGSQQTQPPQRHYGI. Phosphoserine is present on residues serine 10 and serine 24. Residues 100–102, threonine 109, 113–115, aspartate 167, lysine 228, tyrosine 237, and 246–247 each bind ATP; these read FGS, DID, and GV. Mg(2+) contacts are provided by aspartate 113, aspartate 115, and aspartate 167. Residues lysine 444, lysine 445, lysine 506, and lysine 507 each participate in a glycyl lysine isopeptide (Lys-Gly) (interchain with G-Cter in SUMO) cross-link. Residues 490 to 507 carry the Nuclear localization signal 1 motif; that stretch reads RKQLHQLLPSHVLQKRKK. The interval 508 to 643 is ser/Thr-rich; that stretch reads HSTEGVKLTA…TKVPNPIVGV (136 aa). Residues 523-534 show a composition bias toward low complexity; sequence LDLSMDSDNSMS. The disordered stretch occupies residues 523–725; it reads LDLSMDSDNS…SDIPALPANP (203 aa). Positions 535–557 are enriched in polar residues; sequence VPSPTSAMKTSPLNSSGSSQGRN. A Phosphoserine; by MAPK modification is found at serine 537. Serine 558 bears the Phosphoserine mark. Polar residues predominate over residues 566 to 582; the sequence is ASVTSIQASEVSVPQAN. 2 stretches are compositionally biased toward low complexity: residues 583–594 and 611–622; these read SSESPGGPSSES and TVSRVVSSTRLV. Residues lysine 635 and lysine 644 each carry the N6-acetyllysine modification. The short motif at 644–659 is the Nuclear localization signal 2 element; it reads KRTSSPNKEESPKKTK. Basic and acidic residues-rich tracts occupy residues 650-660 and 676-686; these read NKEESPKKTKT and GHDKTETKEQV. Positions 671–739 are required for interaction with NUDT21; that stretch reads CLALSGHDKT…KNSIKLRLNR (69 aa). Polar residues predominate over residues 691-715; the sequence is SAVQSETVPASASLLASQKTSSTDL. Lysine 730 is modified (N6-acetyllysine; alternate). A Glycyl lysine isopeptide (Lys-Gly) (interchain with G-Cter in SUMO); alternate cross-link involves residue lysine 730. Serine 732 carries the post-translational modification Phosphoserine. Lysine 734 bears the N6-acetyllysine; alternate mark. Lysine 734 is covalently cross-linked (Glycyl lysine isopeptide (Lys-Gly) (interchain with G-Cter in SUMO); alternate).

This sequence belongs to the poly(A) polymerase family. In terms of assembly, monomer. Found in a complex with CPSF1, FIP1L1 and PAPOLA. Interacts with AHCYL1 and FIP1L1; the interaction with AHCYL1 seems to increase interaction with FIP1L1. Interacts with NUDT21; the interaction is diminished by acetylation. Interacts with KPNB1; the interaction promotes PAP nuclear import and is inhibited by acetylation of PAP. Requires Mg(2+) as cofactor. It depends on Mn(2+) as a cofactor. Polysumoylated. Varying sumoylation depending on tissue- and cell-type. Highly sumoylated in bladder and NIH 3T3 cells. Sumoylation is required for nuclear localization and enhances PAP stability. Desumoylated by SENP1. Inhibits polymerase activity. Post-translationally, hyperphosphorylation on multiple CDK2 consensus and non-consensus sites in the C-terminal Ser/Thr-rich region represses PAP activity in late M-phase. Phosphorylation/dephosphorylation may regulate the interaction between PAP and CPSF. In terms of processing, acetylated in the C-terminus. Acetylation decreases interaction with NUDT21 and KPNB1, and inhibits nuclear localization through inhibiting binding to the importin alpha/beta complex. In terms of tissue distribution, expressed in brain, thymus, lung, kidney, bladder, testis and spleen.

The protein localises to the nucleus. The enzyme catalyses RNA(n) + ATP = RNA(n)-3'-adenine ribonucleotide + diphosphate. Polymerase that creates the 3'-poly(A) tail of mRNA's. Also required for the endoribonucleolytic cleavage reaction at some polyadenylation sites. May acquire specificity through interaction with a cleavage and polyadenylation specificity factor (CPSF) at its C-terminus. The protein is Poly(A) polymerase alpha (Papola) of Mus musculus (Mouse).